Consider the following 537-residue polypeptide: ATP synthase subunit beta 1 (537 aa).

Residue 164-171 coordinates ATP; the sequence is GGAGVGKT. The interval 471–537 is disordered; sequence PKQSATEKNS…ESLEEPQNGR (67 aa). Composition is skewed to polar residues over residues 473–498 and 507–528; these read QSATEKNSSMNSDLKPSNSESNSPGP and IPSSAKPNVSQPNTFKQDAQNE.

The protein belongs to the ATPase alpha/beta chains family. As to quaternary structure, F-type ATPases have 2 components, CF(1) - the catalytic core - and CF(0) - the membrane proton channel. CF(1) has five subunits: alpha(3), beta(3), gamma(1), delta(1), epsilon(1). CF(0) has three main subunits: a(1), b(2) and c(9-12). The alpha and beta chains form an alternating ring which encloses part of the gamma chain. CF(1) is attached to CF(0) by a central stalk formed by the gamma and epsilon chains, while a peripheral stalk is formed by the delta and b chains.

The protein resides in the cell inner membrane. It carries out the reaction ATP + H2O + 4 H(+)(in) = ADP + phosphate + 5 H(+)(out). Its function is as follows. Produces ATP from ADP in the presence of a proton gradient across the membrane. The catalytic sites are hosted primarily by the beta subunits. In Pseudoalteromonas atlantica (strain T6c / ATCC BAA-1087), this protein is ATP synthase subunit beta 1.